We begin with the raw amino-acid sequence, 217 residues long: RNA chaperone ProQ (217 aa).

The segment at 105–166 (EAKARVQAQR…PREEQHTPVS (62 aa)) is disordered. Basic residues predominate over residues 121–131 (KRERKPRPTTP). Positions 132–162 (RRKEGAERKPRAQKPVEKAPKTVKAPREEQH) are enriched in basic and acidic residues.

Belongs to the ProQ family.

The protein resides in the cytoplasm. Its function is as follows. RNA chaperone with significant RNA binding, RNA strand exchange and RNA duplexing activities. May regulate ProP activity through an RNA-based, post-transcriptional mechanism. The sequence is that of RNA chaperone ProQ from Escherichia coli O8 (strain IAI1).